The primary structure comprises 877 residues: Dystroglycan 1 (877 aa).

An N-terminal signal peptide occupies residues 1–29 (MRMSAGLSLLIPLWGRTFLLLLSVAVTQS). The required for laminin recognition stretch occupies residues 30 to 408 (RWPSEPSDAV…GHIRPTMTIP (379 aa)). An O-glycosylated at one site region spans residues 49–71 (SMHSVLSDLHEAVPTVVGIPDGT). A glycan (N-linked (GlcNAc...) asparagine) is linked at Asn-141. Cys-182 and Cys-264 form a disulfide bridge. The segment at 316 to 468 (ATPTPVTAIG…PPTRIRTTTS (153 aa)) is mucin-like domain. 3 O-linked (Man6P...) threonine glycosylation sites follow: Thr-317, Thr-319, and Thr-379. 2 disordered regions span residues 380-444 (PTLG…PVPR) and 458-480 (SPPTRIRTTTSGLPRGEPNQRPE). A compositionally biased stretch (low complexity) spans 413-433 (PTAVATPPTPTTKNPRVSXPT). The tract at residues 446-468 (TTKAPITRLETASPPTRIRTTTS) is O-glycosylated at seven sites with GalNAc. A Peptidase S72 domain is found at 585–694 (RAPARFTAKF…MSIAVTGSGS (110 aa)). 3 N-linked (GlcNAc...) asparagine glycosylation sites follow: Asn-623, Asn-631, and Asn-643. A disulfide bridge connects residues Cys-651 and Cys-695. The segment covering 706–717 (PKRVPSEAPPTE) has biased composition (pro residues). The interval 706–727 (PKRVPSEAPPTEVPDRDPEKSS) is disordered. Residues 718–727 (VPDRDPEKSS) show a composition bias toward basic and acidic residues. The chain crosses the membrane as a helical span at residues 732–757 (YLHTVIPAVVVAAILLIAGIIAMICY). The Nuclear localization signal signature appears at 758–764 (RKKRKGK). Thr-772 is modified (phosphothreonine). The interval 801–877 (LQEEKAPLPP…YRSPPPYVPP (77 aa)) is required for interaction with CAV3. Residues 805–877 (KAPLPPPEYP…YRSPPPYVPP (73 aa)) form a disordered region. The segment covering 814 to 828 (PNQSVPETTPLNQDT) has biased composition (polar residues). Residues 841–852 (NAPPYQPPPPFT) show a composition bias toward pro residues. The interval 862 to 877 (PKNMTPYRSPPPYVPP) is required for binding DMD and UTRN. The PPXY motif motif lies at 871–874 (PPPY). The residue at position 874 (Tyr-874) is a Phosphotyrosine; by SRC.

As to quaternary structure, monomer. Heterodimer of alpha- and beta-dystroglycan subunits which are the central components of the dystrophin-glycoprotein complex. This complex then can form a dystrophin-associated glycoprotein complex (DGC) which is composed of three subcomplexes: a cytoplasmic complex comprised of DMD (or UTRN), DTNA and a number of syntrophins, such as SNTB1, SNTB2, SNTG1 and SNTG2, the transmembrane dystroglycan complex, and the sarcoglycan-sarcospan complex. Interacts (via the N-terminal of alphaDAG1) with LARGE1; the interaction enhances laminin binding. Interacts with SGCD. Interacts with AGR2 and AGR3. Interacts (betaDAG1) with DMD; the interaction is inhibited by phosphorylation on the PPXY motif. Interacts (betaDAG1, via its PPXY motif) with UTRN (via its WWW and ZZ domains); the interaction is inhibited by phosphorylation on the PPXY motif. Interacts (betaDAG1, via its phosphorylated PPXY motif) with the SH2 domain-containing proteins, FYN, CSK, NCK and SHC. Interacts (betaDAG1) with CAV3 (via a central WW-like domain); the interaction disrupts the binding of DMD. BetaDAG1 directly interacts with ANK3, but not with ANK2; this interaction does not interfere with DMD-binding and is required for retention at costameres. Identified in a dystroglycan complex that contains at least PRX, DRP2, UTRN, DMD and DAG1. Interacts with POMGNT1. BetaDAG1 interacts with CD93. Post-translationally, O-glycosylated. POMGNT1 catalyzes the initial addition of N-acetylglucosamine, giving rise to the GlcNAc(beta1-2)Man(alpha1-)O-Ser/Thr moiety and thus providing the necessary basis for the addition of further carbohydrate moieties. Heavily O-glycosylated comprising of up to two thirds of its mass and the carbohydrate composition differs depending on tissue type. Mucin-type O-glycosylation is important for ligand binding activity. O-mannosylation of alpha-DAG1 is found in high abundance in both brain and muscle where the most abundant glycan is Sia-alpha-2-3-Gal-beta-1-4-Glc-NAc-beta-1-2-Man. In muscle, glycosylation on Thr-317, Thr-319 and Thr-379 by a phosphorylated O-mannosyl glycan with the structure 2-(N-acetylamido)-2-deoxygalactosyl-beta-1,3-2-(N-acetylamido)-2-deoxyglucosyl-beta-1,4-6-phosphomannose is mediated by like-acetylglucosaminyltransferase (LARGE1) protein amd is required for laminin binding. O-glycosylated in the N-terminal region with a core 1 or possibly core 8 glycan. The brain form displays a unique glycosylation pattern which is absent in other tissues; this form shows enhanced binding to laminin LAMA5 compared to the skeletal muscle form. In terms of processing, N-glycosylated. Autolytic cleavage produces the alpha and beta subunits. In cutaneous cells, as well as in certain pathological conditions, shedding of beta-dystroglycan can occur releasing a peptide of about 30 kDa. Post-translationally, SRC-mediated phosphorylation of the PPXY motif of the beta subunit recruits SH2 domain-containing proteins, but inhibits binding to WWW domain-containing proteins, DMD and UTRN. This phosphorylation also inhibits nuclear entry.

It localises to the secreted. The protein localises to the extracellular space. The protein resides in the cell membrane. It is found in the cytoplasm. Its subcellular location is the cytoskeleton. It localises to the nucleus. The protein localises to the nucleoplasm. The protein resides in the sarcolemma. It is found in the postsynaptic cell membrane. Functionally, the dystroglycan complex is involved in a number of processes including laminin and basement membrane assembly, sarcolemmal stability, cell survival, peripheral nerve myelination, nodal structure, cell migration, and epithelial polarization. Its function is as follows. Extracellular peripheral glycoprotein that acts as a receptor for extracellular matrix proteins containing laminin-G domains. Receptor for laminin-2 (LAMA2) and agrin in peripheral nerve Schwann cells. Also acts as a receptor for laminin LAMA5. In terms of biological role, transmembrane protein that plays important roles in connecting the extracellular matrix to the cytoskeleton. Acts as a cell adhesion receptor in both muscle and non-muscle tissues. Receptor for both DMD and UTRN and, through these interactions, scaffolds axin to the cytoskeleton. Also functions in cell adhesion-mediated signaling and implicated in cell polarity. The chain is Dystroglycan 1 from Sus scrofa (Pig).